Reading from the N-terminus, the 286-residue chain is Glycine--tRNA ligase alpha subunit (286 aa).

Belongs to the class-II aminoacyl-tRNA synthetase family. Tetramer of two alpha and two beta subunits.

It localises to the cytoplasm. It catalyses the reaction tRNA(Gly) + glycine + ATP = glycyl-tRNA(Gly) + AMP + diphosphate. The sequence is that of Glycine--tRNA ligase alpha subunit from Campylobacter concisus (strain 13826).